The chain runs to 206 residues: Small ribosomal subunit protein uS4 (206 aa).

The S4 RNA-binding domain maps to 96-156; that stretch reads GRLDNVVYRM…EKAKKQSRVK (61 aa).

The protein belongs to the universal ribosomal protein uS4 family. Part of the 30S ribosomal subunit. Contacts protein S5. The interaction surface between S4 and S5 is involved in control of translational fidelity.

Functionally, one of the primary rRNA binding proteins, it binds directly to 16S rRNA where it nucleates assembly of the body of the 30S subunit. In terms of biological role, with S5 and S12 plays an important role in translational accuracy. This chain is Small ribosomal subunit protein uS4, found in Erwinia tasmaniensis (strain DSM 17950 / CFBP 7177 / CIP 109463 / NCPPB 4357 / Et1/99).